The sequence spans 172 residues: Keratin-associated protein 13-3 (172 aa).

Repeat copies occupy residues 46 to 55 (CQLGSSLYRG), 56 to 65 (CQETCWRPNS), 66 to 75 (CQTLCVESSP), 76 to 85 (CHTSCYYPRT), and 92 to 101 (CLTMHVGSRG). Residues 46 to 101 (CQLGSSLYRGCQETCWRPNSCQTLCVESSPCHTSCYYPRTHMLCNSCLTMHVGSRG) form a 5 X 10 AA approximate repeats region.

It belongs to the PMG family. In terms of assembly, interacts with hair keratins.

In terms of biological role, in the hair cortex, hair keratin intermediate filaments are embedded in an interfilamentous matrix, consisting of hair keratin-associated proteins (KRTAP), which are essential for the formation of a rigid and resistant hair shaft through their extensive disulfide bond cross-linking with abundant cysteine residues of hair keratins. The matrix proteins include the high-sulfur and high-glycine-tyrosine keratins. In Homo sapiens (Human), this protein is Keratin-associated protein 13-3 (KRTAP13-3).